The sequence spans 1026 residues: Multidrug resistance protein MdtC (1026 aa).

Topologically, residues 1 to 6 are cytoplasmic; the sequence is MRFFAL. A helical transmembrane segment spans residues 7-29; the sequence is FIYRPVATILIAAAITLCGILGF. Residues 30-335 lie on the Periplasmic side of the membrane; the sequence is RLLPVAPLPQ…TIRASLQEVE (306 aa). Residues 336–353 form a helical membrane-spanning segment; the sequence is ETLAISVALVILVVFLFL. Residues 354–359 are Cytoplasmic-facing; the sequence is RSGRAT. Residues 360–379 form a helical membrane-spanning segment; it reads LIPAVAVPVSLIGTFAAMYL. The Periplasmic portion of the chain corresponds to 380-388; it reads CGFSLNNLS. Residues 389 to 411 traverse the membrane as a helical segment; sequence LMALTIATGFVVDDAIVVLENIA. Residues 412-430 lie on the Cytoplasmic side of the membrane; that stretch reads RHLEAGMKPLQAALQGTRE. A helical transmembrane segment spans residues 431–453; it reads VGFTVISMSLSLVAVFLPLLLMG. The Periplasmic segment spans residues 454–467; the sequence is GLPGRLLREFAVTL. Residues 468-490 form a helical membrane-spanning segment; the sequence is SVAIGISLVVSLTLTPMMCGWML. Residues 491-852 are Cytoplasmic-facing; the sequence is KSSKPRTQPR…QVFQQTMNSQ (362 aa). Residues 853 to 875 form a helical membrane-spanning segment; sequence LILIVAAIATVYIVLGILYESYV. Residues 876 to 894 are Periplasmic-facing; that stretch reads HPLTILSTLPSAGVGALLA. A helical transmembrane segment spans residues 895–917; the sequence is LELFNAPFSLIALIGIMLLIGIV. At 918 to 947 the chain is on the cytoplasmic side; it reads KKNAIMMVDFALEAQRSGGLTPEQAIFQAC. The helical transmembrane segment at 948 to 970 threads the bilayer; sequence LLRFRPIMMTTLAALFGALPLVL. Residues 971 to 984 are Periplasmic-facing; sequence SGGDGSELRQPLGI. The helical transmembrane segment at 985-1007 threads the bilayer; sequence TIVGGLVMSQLLTLYTTPVVYLF. The Cytoplasmic portion of the chain corresponds to 1008 to 1026; the sequence is FDRLRLRFSRKNSKPVVEI.

Belongs to the resistance-nodulation-cell division (RND) (TC 2.A.6) family. MdtC subfamily. Part of a tripartite efflux system composed of MdtA, MdtB and MdtC. MdtC forms a heteromultimer with MdtB.

The protein localises to the cell inner membrane. The sequence is that of Multidrug resistance protein MdtC from Salmonella typhimurium (strain LT2 / SGSC1412 / ATCC 700720).